The primary structure comprises 258 residues: Imidazole glycerol phosphate synthase subunit HisF (258 aa).

Active-site residues include Asp11 and Asp130.

It belongs to the HisA/HisF family. As to quaternary structure, heterodimer of HisH and HisF.

Its subcellular location is the cytoplasm. It catalyses the reaction 5-[(5-phospho-1-deoxy-D-ribulos-1-ylimino)methylamino]-1-(5-phospho-beta-D-ribosyl)imidazole-4-carboxamide + L-glutamine = D-erythro-1-(imidazol-4-yl)glycerol 3-phosphate + 5-amino-1-(5-phospho-beta-D-ribosyl)imidazole-4-carboxamide + L-glutamate + H(+). It functions in the pathway amino-acid biosynthesis; L-histidine biosynthesis; L-histidine from 5-phospho-alpha-D-ribose 1-diphosphate: step 5/9. Functionally, IGPS catalyzes the conversion of PRFAR and glutamine to IGP, AICAR and glutamate. The HisF subunit catalyzes the cyclization activity that produces IGP and AICAR from PRFAR using the ammonia provided by the HisH subunit. In Prochlorococcus marinus (strain MIT 9211), this protein is Imidazole glycerol phosphate synthase subunit HisF.